We begin with the raw amino-acid sequence, 338 residues long: tRNA N6-adenosine threonylcarbamoyltransferase (338 aa).

Fe cation is bound by residues histidine 112 and histidine 116. Substrate-binding positions include 135–139 (LVSGG), aspartate 168, glycine 181, and asparagine 273. Aspartate 301 contributes to the Fe cation binding site.

It belongs to the KAE1 / TsaD family. The cofactor is Fe(2+).

The protein localises to the cytoplasm. The catalysed reaction is L-threonylcarbamoyladenylate + adenosine(37) in tRNA = N(6)-L-threonylcarbamoyladenosine(37) in tRNA + AMP + H(+). Required for the formation of a threonylcarbamoyl group on adenosine at position 37 (t(6)A37) in tRNAs that read codons beginning with adenine. Is involved in the transfer of the threonylcarbamoyl moiety of threonylcarbamoyl-AMP (TC-AMP) to the N6 group of A37, together with TsaE and TsaB. TsaD likely plays a direct catalytic role in this reaction. This is tRNA N6-adenosine threonylcarbamoyltransferase from Buchnera aphidicola subsp. Baizongia pistaciae (strain Bp).